A 266-amino-acid chain; its full sequence is Tropinone reductase homolog At1g07440 (266 aa).

NADP(+) is bound at residue 18 to 42; the sequence is LVTGGTKGIGHAIVEEFAGFGAVIH. A substrate-binding site is contributed by Ser151. Catalysis depends on Tyr164, which acts as the Proton acceptor.

The protein belongs to the short-chain dehydrogenases/reductases (SDR) family. SDR65C subfamily.

The chain is Tropinone reductase homolog At1g07440 from Arabidopsis thaliana (Mouse-ear cress).